A 565-amino-acid chain; its full sequence is Glycine/sarcosine/dimethylglycine N-methyltransferase (565 aa).

Residues 1–10 (MTKSVDDLAR) show a composition bias toward basic and acidic residues. Positions 1–34 (MTKSVDDLARGDQAGDEQDPVHREQQTFGDNPLE) are disordered. Residues Tyr-45, Trp-53, Arg-62, Ala-86, Asp-107, 134-135 (DW), and Leu-152 contribute to the S-adenosyl-L-methionine site. Substrate is bound by residues Asn-154, Arg-187, and Tyr-226.

The protein belongs to the class I-like SAM-binding methyltransferase superfamily. Glycine N-methyltransferase family. In terms of assembly, monomer.

The catalysed reaction is glycine + 2 S-adenosyl-L-methionine = N,N-dimethylglycine + 2 S-adenosyl-L-homocysteine + 2 H(+). It catalyses the reaction sarcosine + 2 S-adenosyl-L-methionine = glycine betaine + 2 S-adenosyl-L-homocysteine + 2 H(+). The enzyme catalyses glycine + S-adenosyl-L-methionine = sarcosine + S-adenosyl-L-homocysteine + H(+). It carries out the reaction sarcosine + S-adenosyl-L-methionine = N,N-dimethylglycine + S-adenosyl-L-homocysteine + H(+). The catalysed reaction is N,N-dimethylglycine + S-adenosyl-L-methionine = glycine betaine + S-adenosyl-L-homocysteine + H(+). It functions in the pathway amine and polyamine biosynthesis; betaine biosynthesis via glycine pathway; betaine from glycine: step 1/3. It participates in amine and polyamine biosynthesis; betaine biosynthesis via glycine pathway; betaine from glycine: step 2/3. Its pathway is amine and polyamine biosynthesis; betaine biosynthesis via glycine pathway; betaine from glycine: step 3/3. Catalyzes the methylation of glycine, sarcosine and dimethylglycine to sarcosine, dimethylglycine and betaine, respectively, with S-adenosylmethionine (AdoMet) acting as the methyl donor. Shows low level of activity on glycine when expressed in E.coli. This is Glycine/sarcosine/dimethylglycine N-methyltransferase from Actinopolyspora halophila.